The primary structure comprises 351 residues: RCC1 repeat-containing protein C10F6.04 (351 aa).

RCC1 repeat units follow at residues 1 to 48 (MLLS…LLDE), 50 to 106 (SQLW…IVHA), 108 to 162 (RRRV…CVTN), and 163 to 212 (EGNL…VLQE).

The protein resides in the cytoplasm. The protein localises to the nucleus. The polypeptide is RCC1 repeat-containing protein C10F6.04 (Schizosaccharomyces pombe (strain 972 / ATCC 24843) (Fission yeast)).